An 80-amino-acid chain; its full sequence is Defensin-like protein 291 (80 aa).

The first 29 residues, 1-29 (MAASKTTIFIVFVLCLSCTLLVNISGIQA), serve as a signal peptide directing secretion. 3 disulfide bridges follow: cysteine 50–cysteine 70, cysteine 56–cysteine 75, and cysteine 62–cysteine 77.

The protein belongs to the DEFL family.

The protein localises to the secreted. This Arabidopsis thaliana (Mouse-ear cress) protein is Defensin-like protein 291.